A 193-amino-acid chain; its full sequence is Xanthine phosphoribosyltransferase (193 aa).

The xanthine site is built by Leu20 and Asn27. A 5-phospho-alpha-D-ribose 1-diphosphate-binding site is contributed by 129 to 133 (ANGKA). Lys157 contributes to the xanthine binding site.

This sequence belongs to the purine/pyrimidine phosphoribosyltransferase family. Xpt subfamily. Homodimer.

The protein localises to the cytoplasm. The catalysed reaction is XMP + diphosphate = xanthine + 5-phospho-alpha-D-ribose 1-diphosphate. It functions in the pathway purine metabolism; XMP biosynthesis via salvage pathway; XMP from xanthine: step 1/1. Converts the preformed base xanthine, a product of nucleic acid breakdown, to xanthosine 5'-monophosphate (XMP), so it can be reused for RNA or DNA synthesis. The polypeptide is Xanthine phosphoribosyltransferase (Bifidobacterium animalis subsp. lactis (strain AD011)).